The primary structure comprises 725 residues: Homeobox protein unc-62 (725 aa).

Residues 133 to 218 form the MEIS N-terminal domain; sequence SSDVCSSASF…PLDIVGDERA (86 aa). Disordered regions lie at residues 214–258, 295–317, 329–359, 386–419, 491–555, and 615–661; these read GDER…PYEP, SSSSSQPQPGDHPLANGGTLHST, VSSPSTCSSGGLRQDSTPLSGETPMANGNSM, SLHQHHLHHPHHFPHHQLQPPAHHQDFLLPPPPQ, VKME…KRKV, and IDQN…PDPT. The segment covering 219-239 has biased composition (low complexity); the sequence is SSSQPPMSPGSMGHHGHSGSP. Residues 388 to 400 are compositionally biased toward basic residues; sequence HQHHLHHPHHFPH. Positions 498–508 are enriched in low complexity; it reads SVSSSKSGGKK. Polar residues predominate over residues 541–550; it reads LSDSANGSQN. The homeobox; TALE-type DNA-binding region spans 552 to 614; that stretch reads KRKVPKVFSK…NARRRIVQPM (63 aa).

It belongs to the TALE/MEIS homeobox family.

Its subcellular location is the nucleus. Acts redundantly with ceh-20 and ceh-40 to perform overlapping roles during embryogenesis. Required for postembryonic development of the ectoderm, including the Q, V and P cell lineages, playing a crucial role in ensuring that these cells and their descendants undergo their invariant patterns of cell division, migration, fusion and morphogenesis. Has a role in the mig-13 pathway to promote anterior migration of neuroblasts in the Q lineage. Required for multiple roles in regulating vulva development. This chain is Homeobox protein unc-62 (unc-62), found in Caenorhabditis briggsae.